Reading from the N-terminus, the 272-residue chain is Cytochrome c oxidase subunit 3 (272 aa).

Helical transmembrane passes span 23 to 43, 45 to 65, 91 to 111, 137 to 157, 169 to 189, 210 to 230, and 249 to 269; these read PWPF…VMYM, AYVN…LVMF, FGVI…FWAF, WEIP…VTWC, SVLS…FQAY, ATGF…VCLI, and AWYW…IYWW.

It belongs to the cytochrome c oxidase subunit 3 family. As to quaternary structure, component of the cytochrome c oxidase (complex IV, CIV), a multisubunit enzyme composed of a catalytic core of 3 subunits and several supernumerary subunits. The complex exists as a monomer or a dimer and forms supercomplexes (SCs) in the inner mitochondrial membrane with ubiquinol-cytochrome c oxidoreductase (cytochrome b-c1 complex, complex III, CIII).

Its subcellular location is the mitochondrion inner membrane. The catalysed reaction is 4 Fe(II)-[cytochrome c] + O2 + 8 H(+)(in) = 4 Fe(III)-[cytochrome c] + 2 H2O + 4 H(+)(out). Its function is as follows. Component of the cytochrome c oxidase, the last enzyme in the mitochondrial electron transport chain which drives oxidative phosphorylation. The respiratory chain contains 3 multisubunit complexes succinate dehydrogenase (complex II, CII), ubiquinol-cytochrome c oxidoreductase (cytochrome b-c1 complex, complex III, CIII) and cytochrome c oxidase (complex IV, CIV), that cooperate to transfer electrons derived from NADH and succinate to molecular oxygen, creating an electrochemical gradient over the inner membrane that drives transmembrane transport and the ATP synthase. Cytochrome c oxidase is the component of the respiratory chain that catalyzes the reduction of oxygen to water. Electrons originating from reduced cytochrome c in the intermembrane space (IMS) are transferred via the dinuclear copper A center (CU(A)) of subunit 2 and heme A of subunit 1 to the active site in subunit 1, a binuclear center (BNC) formed by heme A3 and copper B (CU(B)). The BNC reduces molecular oxygen to 2 water molecules using 4 electrons from cytochrome c in the IMS and 4 protons from the mitochondrial matrix. The sequence is that of Cytochrome c oxidase subunit 3 (COX3) from Chondrus crispus (Carrageen Irish moss).